The sequence spans 316 residues: N-acetylmuramic acid 6-phosphate etherase (316 aa).

The tract at residues 1 to 23 (MAGFDPTLQPSDDRGHLLTEQSN) is disordered. An SIS domain is found at 66–229 (ISKRLSSGGR…STTVMVRLGK (164 aa)). The active-site Proton donor is E94. E125 is a catalytic residue.

Belongs to the GCKR-like family. MurNAc-6-P etherase subfamily. As to quaternary structure, homodimer.

It carries out the reaction N-acetyl-D-muramate 6-phosphate + H2O = N-acetyl-D-glucosamine 6-phosphate + (R)-lactate. The protein operates within amino-sugar metabolism; N-acetylmuramate degradation. Specifically catalyzes the cleavage of the D-lactyl ether substituent of MurNAc 6-phosphate, producing GlcNAc 6-phosphate and D-lactate. The chain is N-acetylmuramic acid 6-phosphate etherase from Synechococcus sp. (strain CC9902).